A 188-amino-acid chain; its full sequence is Small ribosomal subunit protein eS8 (188 aa).

The tract at residues 1–34 is disordered; the sequence is MGISRDSRHKRRLTGGRYPVHKKKRKYELGRPSS. Residues 7–26 show a composition bias toward basic residues; it reads SRHKRRLTGGRYPVHKKKRK.

The protein belongs to the eukaryotic ribosomal protein eS8 family.

The chain is Small ribosomal subunit protein eS8 (RPS8) from Theileria parva (East coast fever infection agent).